The following is a 102-amino-acid chain: UPF0122 protein MPN_424 (102 aa).

Belongs to the UPF0122 family.

Functionally, might take part in the signal recognition particle (SRP) pathway. This is inferred from the conservation of its genetic proximity to ftsY/ffh. May be a regulatory protein. The polypeptide is UPF0122 protein MPN_424 (Mycoplasma pneumoniae (strain ATCC 29342 / M129 / Subtype 1) (Mycoplasmoides pneumoniae)).